Reading from the N-terminus, the 105-residue chain is DNA-directed RNA polymerase subunit omega (105 aa).

This sequence belongs to the RNA polymerase subunit omega family. The RNAP catalytic core consists of 2 alpha, 1 beta, 1 beta' and 1 omega subunit. When a sigma factor is associated with the core the holoenzyme is formed, which can initiate transcription.

It catalyses the reaction RNA(n) + a ribonucleoside 5'-triphosphate = RNA(n+1) + diphosphate. Its function is as follows. Promotes RNA polymerase assembly. Latches the N- and C-terminal regions of the beta' subunit thereby facilitating its interaction with the beta and alpha subunits. The polypeptide is DNA-directed RNA polymerase subunit omega (Streptococcus uberis (strain ATCC BAA-854 / 0140J)).